The following is a 121-amino-acid chain: Putative RNase MJ1216 (121 aa).

Active-site residues include Arg-76 and His-81. The RX(4)HXY motif signature appears at 76–83; it reads RDKLIHQY. Tyr-83 bears the O-di-AMP-tyrosine mark.

This sequence belongs to the HepT RNase toxin family. In terms of assembly, homodimer, probably forms a complex with antitoxin MJ1215 or MJ1217. Post-translationally, modified by antitoxin MJ1215 or MJ1217; probably at least 2 successive AMPylation events occur on Tyr-83.

Probable toxic component of a putative type VII toxin-antitoxin (TA) system, probably an RNase. Probably neutralized by antitoxin MJ1215 or MJ1217. Neutralization may be due to AMPylation by antitoxin. The protein is Putative RNase MJ1216 of Methanocaldococcus jannaschii (strain ATCC 43067 / DSM 2661 / JAL-1 / JCM 10045 / NBRC 100440) (Methanococcus jannaschii).